The following is a 231-amino-acid chain: Ribosomal RNA large subunit methyltransferase E (231 aa).

S-adenosyl-L-methionine-binding residues include Gly76, Trp78, Asp99, Asp115, and Asp139. Lys179 (proton acceptor) is an active-site residue.

The protein belongs to the class I-like SAM-binding methyltransferase superfamily. RNA methyltransferase RlmE family.

Its subcellular location is the cytoplasm. The catalysed reaction is uridine(2552) in 23S rRNA + S-adenosyl-L-methionine = 2'-O-methyluridine(2552) in 23S rRNA + S-adenosyl-L-homocysteine + H(+). In terms of biological role, specifically methylates the uridine in position 2552 of 23S rRNA at the 2'-O position of the ribose in the fully assembled 50S ribosomal subunit. In Bradyrhizobium sp. (strain BTAi1 / ATCC BAA-1182), this protein is Ribosomal RNA large subunit methyltransferase E.